Here is a 493-residue protein sequence, read N- to C-terminus: Probable cytochrome P450 508A2 (493 aa).

A helical transmembrane segment spans residues 1–21; that stretch reads MIFGIIVYLFLIYILHNAYSK. Cys439 lines the heme pocket.

Belongs to the cytochrome P450 family. Heme serves as cofactor.

Its subcellular location is the membrane. This chain is Probable cytochrome P450 508A2 (cyp508A2-1), found in Dictyostelium discoideum (Social amoeba).